The primary structure comprises 244 residues: Large ribosomal subunit protein bL25 (244 aa).

The segment at alanine 197–glutamate 244 is disordered. The segment covering alanine 204 to glutamate 215 has biased composition (low complexity).

This sequence belongs to the bacterial ribosomal protein bL25 family. CTC subfamily. Part of the 50S ribosomal subunit; part of the 5S rRNA/L5/L18/L25 subcomplex. Contacts the 5S rRNA. Binds to the 5S rRNA independently of L5 and L18.

Functionally, this is one of the proteins that binds to the 5S RNA in the ribosome where it forms part of the central protuberance. This is Large ribosomal subunit protein bL25 from Coxiella burnetii (strain CbuK_Q154) (Coxiella burnetii (strain Q154)).